We begin with the raw amino-acid sequence, 332 residues long: Glycerol-3-phosphate dehydrogenase [NAD(P)+] (332 aa).

NADPH contacts are provided by Trp-13, Lys-34, and Lys-108. The sn-glycerol 3-phosphate site is built by Lys-108, Gly-136, and Ser-138. Ala-140 contacts NADPH. 5 residues coordinate sn-glycerol 3-phosphate: Lys-191, Asp-244, Ser-254, Arg-255, and Asn-256. Catalysis depends on Lys-191, which acts as the Proton acceptor. Arg-255 is an NADPH binding site. The NADPH site is built by Val-279 and Glu-281.

Belongs to the NAD-dependent glycerol-3-phosphate dehydrogenase family.

It localises to the cytoplasm. The enzyme catalyses sn-glycerol 3-phosphate + NAD(+) = dihydroxyacetone phosphate + NADH + H(+). It carries out the reaction sn-glycerol 3-phosphate + NADP(+) = dihydroxyacetone phosphate + NADPH + H(+). It functions in the pathway membrane lipid metabolism; glycerophospholipid metabolism. Catalyzes the reduction of the glycolytic intermediate dihydroxyacetone phosphate (DHAP) to sn-glycerol 3-phosphate (G3P), the key precursor for phospholipid synthesis. In Francisella tularensis subsp. mediasiatica (strain FSC147), this protein is Glycerol-3-phosphate dehydrogenase [NAD(P)+].